Reading from the N-terminus, the 348-residue chain is Aspartate carbamoyltransferase catalytic subunit (348 aa).

Residues arginine 57 and threonine 58 each contribute to the carbamoyl phosphate site. Lysine 86 is a binding site for L-aspartate. Carbamoyl phosphate is bound by residues arginine 107, histidine 135, and glutamine 138. L-aspartate-binding residues include arginine 172 and arginine 234. Residues leucine 274 and proline 275 each contribute to the carbamoyl phosphate site.

It belongs to the aspartate/ornithine carbamoyltransferase superfamily. ATCase family. Heterododecamer (2C3:3R2) of six catalytic PyrB chains organized as two trimers (C3), and six regulatory PyrI chains organized as three dimers (R2).

The enzyme catalyses carbamoyl phosphate + L-aspartate = N-carbamoyl-L-aspartate + phosphate + H(+). It functions in the pathway pyrimidine metabolism; UMP biosynthesis via de novo pathway; (S)-dihydroorotate from bicarbonate: step 2/3. Functionally, catalyzes the condensation of carbamoyl phosphate and aspartate to form carbamoyl aspartate and inorganic phosphate, the committed step in the de novo pyrimidine nucleotide biosynthesis pathway. The protein is Aspartate carbamoyltransferase catalytic subunit of Dichelobacter nodosus (strain VCS1703A).